The chain runs to 398 residues: tRNA-specific 2-thiouridylase MnmA (398 aa).

ATP is bound by residues 18 to 25 and leucine 44; that span reads AMSGGVDS. Cysteine 112 serves as the catalytic Nucleophile. The cysteines at positions 112 and 213 are disulfide-linked. Residue glycine 136 coordinates ATP. Residues 163-165 form an interaction with tRNA region; that stretch reads RDQ. Cysteine 213 (cysteine persulfide intermediate) is an active-site residue.

The protein belongs to the MnmA/TRMU family.

The protein localises to the cytoplasm. It catalyses the reaction S-sulfanyl-L-cysteinyl-[protein] + uridine(34) in tRNA + AH2 + ATP = 2-thiouridine(34) in tRNA + L-cysteinyl-[protein] + A + AMP + diphosphate + H(+). In terms of biological role, catalyzes the 2-thiolation of uridine at the wobble position (U34) of tRNA, leading to the formation of s(2)U34. This chain is tRNA-specific 2-thiouridylase MnmA, found in Sinorhizobium medicae (strain WSM419) (Ensifer medicae).